The sequence spans 100 residues: Protein Tat (100 aa).

An interaction with human CREBBP region spans residues methionine 1 to asparagine 24. The transactivation stretch occupies residues methionine 1–glycine 48. Zn(2+) is bound by residues cysteine 22, cysteine 25, and cysteine 27. Residues cysteine 22–cysteine 37 are cysteine-rich. Lysine 28 carries the N6-acetyllysine; by host PCAF modification. The Zn(2+) site is built by cysteine 30, histidine 33, cysteine 34, and cysteine 37. Residues phenylalanine 38–glycine 48 form a core region. A compositionally biased stretch (basic residues) spans glycine 48–threonine 58. Positions glycine 48–glutamine 100 are disordered. A Nuclear localization signal, RNA-binding (TAR), and protein transduction motif is present at residues arginine 49 to arginine 57. Residues arginine 49 to lysine 87 form an interaction with the host capping enzyme RNGTT region. 2 positions are modified to N6-acetyllysine; by host EP300 and GCN5L2: lysine 50 and lysine 51. The residue at position 52 (arginine 52) is an Asymmetric dimethylarginine; by host PRMT6. Residues serine 63 to arginine 79 show a composition bias toward polar residues. A Glycyl lysine isopeptide (Lys-Gly) (interchain with G-Cter in ubiquitin) cross-link involves residue lysine 72. Over residues glycine 80 to glutamine 100 the composition is skewed to basic and acidic residues.

This sequence belongs to the lentiviruses Tat family. As to quaternary structure, interacts with host CCNT1. Associates with the P-TEFb complex composed at least of Tat, P-TEFb (CDK9 and CCNT1), TAR RNA, RNA Pol II. Recruits the HATs CREBBP, TAF1/TFIID, EP300, PCAF and GCN5L2. Interacts with host KAT5/Tip60; this interaction targets the latter to degradation. Interacts with the host deacetylase SIRT1. Interacts with host capping enzyme RNGTT; this interaction stimulates RNGTT. Binds to host KDR, and to the host integrins ITGAV/ITGB3 and ITGA5/ITGB1. Interacts with host KPNB1/importin beta-1 without previous binding to KPNA1/importin alpha-1. Interacts with EIF2AK2. Interacts with host nucleosome assembly protein NAP1L1; this interaction may be required for the transport of Tat within the nucleus, since the two proteins interact at the nuclear rim. Interacts with host C1QBP/SF2P32; this interaction involves lysine-acetylated Tat. Interacts with the host chemokine receptors CCR2, CCR3 and CXCR4. Interacts with host DPP4/CD26; this interaction may trigger an anti-proliferative effect. Interacts with host LDLR. Interacts with the host extracellular matrix metalloproteinase MMP1. Interacts with host PRMT6; this interaction mediates Tat's methylation. Interacts with, and is ubiquitinated by MDM2/Hdm2. Interacts with host PSMC3 and HTATIP2. Interacts with STAB1; this interaction may overcome SATB1-mediated repression of IL2 and IL2RA (interleukin) in T cells by binding to the same domain than HDAC1. Interacts (when acetylated) with human CDK13, thereby increasing HIV-1 mRNA splicing and promoting the production of the doubly spliced HIV-1 protein Nef. Interacts with host TBP; this interaction modulates the activity of transcriptional pre-initiation complex. Interacts with host RELA. Post-translationally, asymmetrical arginine methylation by host PRMT6 seems to diminish the transactivation capacity of Tat and affects the interaction with host CCNT1. Acetylation by EP300, CREBBP, GCN5L2/GCN5 and PCAF regulates the transactivation activity of Tat. EP300-mediated acetylation of Lys-50 promotes dissociation of Tat from the TAR RNA through the competitive binding to PCAF's bromodomain. In addition, the non-acetylated Tat's N-terminus can also interact with PCAF. PCAF-mediated acetylation of Lys-28 enhances Tat's binding to CCNT1. Lys-50 is deacetylated by SIRT1. In terms of processing, polyubiquitination by host MDM2 does not target Tat to degradation, but activates its transactivation function and fosters interaction with CCNT1 and TAR RNA. Post-translationally, phosphorylated by EIF2AK2 on serine and threonine residues adjacent to the basic region important for TAR RNA binding and function. Phosphorylation of Tat by EIF2AK2 is dependent on the prior activation of EIF2AK2 by dsRNA.

Its subcellular location is the host nucleus. It localises to the host nucleolus. The protein localises to the host cytoplasm. The protein resides in the secreted. Functionally, transcriptional activator that increases RNA Pol II processivity, thereby increasing the level of full-length viral transcripts. Recognizes a hairpin structure at the 5'-LTR of the nascent viral mRNAs referred to as the transactivation responsive RNA element (TAR) and recruits the cyclin T1-CDK9 complex (P-TEFb complex) that will in turn hyperphosphorylate the RNA polymerase II to allow efficient elongation. The CDK9 component of P-TEFb and other Tat-activated kinases hyperphosphorylate the C-terminus of RNA Pol II that becomes stabilized and much more processive. Other factors such as HTATSF1/Tat-SF1, SUPT5H/SPT5, and HTATIP2 are also important for Tat's function. Besides its effect on RNA Pol II processivity, Tat induces chromatin remodeling of proviral genes by recruiting the histone acetyltransferases (HATs) CREBBP, EP300 and PCAF to the chromatin. This also contributes to the increase in proviral transcription rate, especially when the provirus integrates in transcriptionally silent region of the host genome. To ensure maximal activation of the LTR, Tat mediates nuclear translocation of NF-kappa-B by interacting with host RELA. Through its interaction with host TBP, Tat may also modulate transcription initiation. Tat can reactivate a latently infected cell by penetrating in it and transactivating its LTR promoter. In the cytoplasm, Tat is thought to act as a translational activator of HIV-1 mRNAs. Its function is as follows. Extracellular circulating Tat can be endocytosed by surrounding uninfected cells via the binding to several surface receptors such as CD26, CXCR4, heparan sulfate proteoglycans (HSPG) or LDLR. Neurons are rarely infected, but they internalize Tat via their LDLR. Through its interaction with nuclear HATs, Tat is potentially able to control the acetylation-dependent cellular gene expression. Modulates the expression of many cellular genes involved in cell survival, proliferation or in coding for cytokines or cytokine receptors. Tat plays a role in T-cell and neurons apoptosis. Tat induced neurotoxicity and apoptosis probably contribute to neuroAIDS. Circulating Tat also acts as a chemokine-like and/or growth factor-like molecule that binds to specific receptors on the surface of the cells, affecting many cellular pathways. In the vascular system, Tat binds to ITGAV/ITGB3 and ITGA5/ITGB1 integrins dimers at the surface of endothelial cells and competes with bFGF for heparin-binding sites, leading to an excess of soluble bFGF. This Pan (chimpanzees) protein is Protein Tat.